The chain runs to 380 residues: Flap endonuclease 1-A (380 aa).

The interval 1 to 105 (MGIKGLTKLL…QELAKRYSKR (105 aa)) is N-domain. Asp-34 is a Mg(2+) binding site. Arg-71 is a DNA binding site. Residues Asp-87, Glu-159, Glu-161, Asp-180, and Asp-182 each coordinate Mg(2+). The I-domain stretch occupies residues 123–254 (AIEKFSKRTV…QTALKLIRQH (132 aa)). Glu-159 contacts DNA. Residues Gly-232 and Asp-234 each coordinate DNA. Asp-234 lines the Mg(2+) pocket. Positions 336–344 (SQGRLESFF) are interaction with PCNA. The tract at residues 351 to 380 (SVPLKRKDTSEKPTKAVANKKTKGAGGKKK) is disordered. Basic and acidic residues predominate over residues 355–364 (KRKDTSEKPT). Residues 368 to 380 (ANKKTKGAGGKKK) are compositionally biased toward basic residues.

This sequence belongs to the XPG/RAD2 endonuclease family. FEN1 subfamily. In terms of assembly, interacts with PCNA. Three molecules of FEN1 bind to one PCNA trimer with each molecule binding to one PCNA monomer. PCNA stimulates the nuclease activity without altering cleavage specificity. The cofactor is Mg(2+). In terms of processing, phosphorylated. Phosphorylation upon DNA damage induces relocalization to the nuclear plasma. Strongly expressed in proliferating tissues: root and shoot apical meristem, tiller bud, leaf, ligule primordia, marginal meristem of young leaves and panicles. Not expressed in mature leaves when exposed to UV.

The protein localises to the nucleus. Its subcellular location is the nucleolus. It is found in the nucleoplasm. It localises to the mitochondrion. With respect to regulation, inhibited by NaCl. Its function is as follows. Structure-specific nuclease with 5'-flap endonuclease and 5'-3' exonuclease activities involved in DNA replication and repair. During DNA replication, cleaves the 5'-overhanging flap structure that is generated by displacement synthesis when DNA polymerase encounters the 5'-end of a downstream Okazaki fragment. It enters the flap from the 5'-end and then tracks to cleave the flap base, leaving a nick for ligation. Also involved in the long patch base excision repair (LP-BER) pathway, by cleaving within the apurinic/apyrimidinic (AP) site-terminated flap. Acts as a genome stabilization factor that prevents flaps from equilibrating into structures that lead to duplications and deletions. Also possesses 5'-3' exonuclease activity on nicked or gapped double-stranded DNA, and exhibits RNase H activity. Also involved in replication and repair of rDNA and in repairing mitochondrial DNA. May be required for cell proliferation. The protein is Flap endonuclease 1-A of Oryza sativa subsp. japonica (Rice).